A 388-amino-acid polypeptide reads, in one-letter code: 1-deoxy-D-xylulose 5-phosphate reductoisomerase (388 aa).

Positions 10, 11, 12, 13, 37, 38, and 123 each coordinate NADPH. Lys124 is a binding site for 1-deoxy-D-xylulose 5-phosphate. Glu125 contributes to the NADPH binding site. Asp149 contributes to the Mn(2+) binding site. The 1-deoxy-D-xylulose 5-phosphate site is built by Ser150, Glu151, Ser175, and His198. Glu151 provides a ligand contact to Mn(2+). Residue Gly204 coordinates NADPH. 4 residues coordinate 1-deoxy-D-xylulose 5-phosphate: Ser211, Asn216, Lys217, and Glu220. Glu220 contacts Mn(2+).

This sequence belongs to the DXR family. Mg(2+) is required as a cofactor. Requires Mn(2+) as cofactor.

The catalysed reaction is 2-C-methyl-D-erythritol 4-phosphate + NADP(+) = 1-deoxy-D-xylulose 5-phosphate + NADPH + H(+). It functions in the pathway isoprenoid biosynthesis; isopentenyl diphosphate biosynthesis via DXP pathway; isopentenyl diphosphate from 1-deoxy-D-xylulose 5-phosphate: step 1/6. Its function is as follows. Catalyzes the NADPH-dependent rearrangement and reduction of 1-deoxy-D-xylulose-5-phosphate (DXP) to 2-C-methyl-D-erythritol 4-phosphate (MEP). The chain is 1-deoxy-D-xylulose 5-phosphate reductoisomerase from Pelagibacter ubique (strain HTCC1062).